We begin with the raw amino-acid sequence, 368 residues long: tRNA-specific 2-thiouridylase MnmA (368 aa).

ATP contacts are provided by residues 11 to 18 and Met-37; that span reads GMSGGVDS. The segment at 97–99 is interaction with target base in tRNA; the sequence is NPD. The active-site Nucleophile is the Cys-102. A disulfide bridge connects residues Cys-102 and Cys-199. Gly-127 contributes to the ATP binding site. The interaction with tRNA stretch occupies residues 149 to 151; sequence KDQ. Cys-199 (cysteine persulfide intermediate) is an active-site residue. Positions 311-312 are interaction with tRNA; it reads RY.

The protein belongs to the MnmA/TRMU family. Interacts with TusE.

It localises to the cytoplasm. It carries out the reaction S-sulfanyl-L-cysteinyl-[protein] + uridine(34) in tRNA + AH2 + ATP = 2-thiouridine(34) in tRNA + L-cysteinyl-[protein] + A + AMP + diphosphate + H(+). Catalyzes the 2-thiolation of uridine at the wobble position (U34) of tRNA(Lys), tRNA(Glu) and tRNA(Gln), leading to the formation of s(2)U34, the first step of tRNA-mnm(5)s(2)U34 synthesis. Sulfur is provided by IscS, via a sulfur-relay system. Binds ATP and its substrate tRNAs. This Citrobacter koseri (strain ATCC BAA-895 / CDC 4225-83 / SGSC4696) protein is tRNA-specific 2-thiouridylase MnmA.